Here is an 844-residue protein sequence, read N- to C-terminus: Protein translocase subunit SecA (844 aa).

ATP is bound by residues Gln-89, 107-111 (GEGKT), and Asp-497. 4 residues coordinate Zn(2+): Cys-829, Cys-831, Cys-840, and His-841.

Belongs to the SecA family. As to quaternary structure, monomer and homodimer. Part of the essential Sec protein translocation apparatus which comprises SecA, SecYEG and auxiliary proteins SecDF. Other proteins may also be involved. It depends on Zn(2+) as a cofactor.

The protein localises to the cell membrane. It localises to the cytoplasm. It carries out the reaction ATP + H2O + cellular proteinSide 1 = ADP + phosphate + cellular proteinSide 2.. In terms of biological role, part of the Sec protein translocase complex. Interacts with the SecYEG preprotein conducting channel. Has a central role in coupling the hydrolysis of ATP to the transfer of proteins into and across the cell membrane, serving as an ATP-driven molecular motor driving the stepwise translocation of polypeptide chains across the membrane. This chain is Protein translocase subunit SecA, found in Streptococcus suis (strain 98HAH33).